A 483-amino-acid polypeptide reads, in one-letter code: Cobyric acid synthase (483 aa).

Residues 248–435 (LLKVVVPVLP…LHGLFETPAA (188 aa)) enclose the GATase cobBQ-type domain. Catalysis depends on Cys329, which acts as the Nucleophile. The active site involves His427.

This sequence belongs to the CobB/CobQ family. CobQ subfamily.

Its pathway is cofactor biosynthesis; adenosylcobalamin biosynthesis. Its function is as follows. Catalyzes amidations at positions B, D, E, and G on adenosylcobyrinic A,C-diamide. NH(2) groups are provided by glutamine, and one molecule of ATP is hydrogenolyzed for each amidation. The chain is Cobyric acid synthase from Pseudomonas fluorescens (strain ATCC BAA-477 / NRRL B-23932 / Pf-5).